The chain runs to 669 residues: Translation factor GUF1, mitochondrial (669 aa).

A mitochondrion-targeting transit peptide spans 1–49; sequence MWTLAGQGWWRGRALAAWVTEAARKGLLWPHLAPARGTAAESRAPDRCY. Positions 66-247 constitute a tr-type G domain; that stretch reads ENTRNFSIIA…AVIKRIPFPK (182 aa). Residues 75-82, 140-144, and 194-197 contribute to the GTP site; these read AHVDHGKS, DTPGH, and NKID.

The protein belongs to the TRAFAC class translation factor GTPase superfamily. Classic translation factor GTPase family. LepA subfamily.

It localises to the mitochondrion inner membrane. The enzyme catalyses GTP + H2O = GDP + phosphate + H(+). In terms of biological role, promotes mitochondrial protein synthesis. May act as a fidelity factor of the translation reaction, by catalyzing a one-codon backward translocation of tRNAs on improperly translocated ribosomes. Binds to mitochondrial ribosomes in a GTP-dependent manner. The sequence is that of Translation factor GUF1, mitochondrial from Bos taurus (Bovine).